A 426-amino-acid polypeptide reads, in one-letter code: Serine--tRNA ligase (426 aa).

Position 231–233 (231–233 (TSE)) interacts with L-serine. An ATP-binding site is contributed by 262 to 264 (RSE). Residue Glu285 coordinates L-serine. Position 349 to 352 (349 to 352 (EISS)) interacts with ATP. Ser385 provides a ligand contact to L-serine.

This sequence belongs to the class-II aminoacyl-tRNA synthetase family. Type-1 seryl-tRNA synthetase subfamily. In terms of assembly, homodimer. The tRNA molecule binds across the dimer.

Its subcellular location is the cytoplasm. The enzyme catalyses tRNA(Ser) + L-serine + ATP = L-seryl-tRNA(Ser) + AMP + diphosphate + H(+). The catalysed reaction is tRNA(Sec) + L-serine + ATP = L-seryl-tRNA(Sec) + AMP + diphosphate + H(+). It participates in aminoacyl-tRNA biosynthesis; selenocysteinyl-tRNA(Sec) biosynthesis; L-seryl-tRNA(Sec) from L-serine and tRNA(Sec): step 1/1. Catalyzes the attachment of serine to tRNA(Ser). Is also able to aminoacylate tRNA(Sec) with serine, to form the misacylated tRNA L-seryl-tRNA(Sec), which will be further converted into selenocysteinyl-tRNA(Sec). The polypeptide is Serine--tRNA ligase (Legionella pneumophila (strain Paris)).